The chain runs to 79 residues: Acyl carrier protein (79 aa).

In terms of domain architecture, Carrier spans 2-77; the sequence is SDVLERVRKI…DAVKFIQERL (76 aa). Ser37 carries the post-translational modification O-(pantetheine 4'-phosphoryl)serine.

This sequence belongs to the acyl carrier protein (ACP) family. 4'-phosphopantetheine is transferred from CoA to a specific serine of apo-ACP by AcpS. This modification is essential for activity because fatty acids are bound in thioester linkage to the sulfhydryl of the prosthetic group.

Its subcellular location is the cytoplasm. It functions in the pathway lipid metabolism; fatty acid biosynthesis. Its function is as follows. Carrier of the growing fatty acid chain in fatty acid biosynthesis. This is Acyl carrier protein from Phenylobacterium zucineum (strain HLK1).